The primary structure comprises 301 residues: MSARFYGVISPFITPFREDLSLDREAVAWLARYQAEKGVHGIFPNSTTGEFVHLSREEAVEVTRLVLEAVGGKVWVIPGISANYTEDSVALGRTFKDLGVDGAVVTPPYFFKVSPERLKVHFSTILEKVDLPIIVYNIPATTGINIPVGLYLELAKEHSNLAGAKATVESFTYFRQLVQVVKAERKDFAVLTGLDDLLLPVLMMGGDGGIMALANAAPQIHREVYDAYRSGDLKRALEAWHKLLRLVRVYDYATSFPTSVKTLLKVMGAPVKPYARTPLTPETREVEEKIAQIARELGLKI.

Thr47 functions as the Charge relay system in the catalytic mechanism. The active-site Proton donor is the Tyr136. Lys165 serves as the catalytic Schiff-base intermediate with substrate.

It belongs to the DapA family. As to quaternary structure, homotetramer.

Its subcellular location is the cytoplasm. This is an uncharacterized protein from Thermofilum pendens (strain DSM 2475 / Hrk 5).